A 239-amino-acid polypeptide reads, in one-letter code: Putative zinc finger protein 132L (239 aa).

The segment at D20–K40 is disordered. Residues P28–K40 show a composition bias toward basic and acidic residues. 2 consecutive C3H1-type zinc fingers follow at residues I44 to E68 and R81 to S106. A disordered region spans residues P128–E151. A compositionally biased stretch (pro residues) spans H135 to P147.

The polypeptide is Putative zinc finger protein 132L (Acheta domesticus (House cricket)).